The following is a 91-amino-acid chain: MPRSLKKGPFIDLHLLKKVEVAVEKNDRKPVKTWSRRSMILPQMVGLTIAVHNGRQHVPVLISEDMVGHKLGEFAATRTYRGHAADKKAKR.

It belongs to the universal ribosomal protein uS19 family.

In terms of biological role, protein S19 forms a complex with S13 that binds strongly to the 16S ribosomal RNA. This is Small ribosomal subunit protein uS19 from Azotobacter vinelandii (strain DJ / ATCC BAA-1303).